A 541-amino-acid polypeptide reads, in one-letter code: GMP synthase [glutamine-hydrolyzing] (541 aa).

One can recognise a Glutamine amidotransferase type-1 domain in the interval 17–212; that stretch reads TILVLDFGSQ…AVDICQSTTD (196 aa). The Nucleophile role is filled by cysteine 93. Active-site residues include histidine 186 and glutamate 188. Residues 213-416 enclose the GMPS ATP-PPase domain; the sequence is WTMGKFVDQE…LGIPEDLVWR (204 aa). ATP is bound at residue 241 to 247; sequence SGGVDST. 4 residues coordinate XMP: arginine 315, aspartate 478, lysine 533, and glutamate 539.

In terms of assembly, homodimer. Requires Mg(2+) as cofactor.

Its subcellular location is the cytoplasm. It localises to the cytosol. The enzyme catalyses XMP + L-glutamine + ATP + H2O = GMP + L-glutamate + AMP + diphosphate + 2 H(+). It functions in the pathway purine metabolism; GMP biosynthesis; GMP from XMP (L-Gln route): step 1/1. Catalyzes the conversion of xanthine monophosphate (XMP) to GMP in the presence of glutamine and ATP through an adenyl-XMP intermediate. The chain is GMP synthase [glutamine-hydrolyzing] (GUA1) from Phaeosphaeria nodorum (strain SN15 / ATCC MYA-4574 / FGSC 10173) (Glume blotch fungus).